The following is a 136-amino-acid chain: Ribonuclease P protein component (136 aa).

It belongs to the RnpA family. Consists of a catalytic RNA component (M1 or rnpB) and a protein subunit.

The catalysed reaction is Endonucleolytic cleavage of RNA, removing 5'-extranucleotides from tRNA precursor.. Functionally, RNaseP catalyzes the removal of the 5'-leader sequence from pre-tRNA to produce the mature 5'-terminus. It can also cleave other RNA substrates such as 4.5S RNA. The protein component plays an auxiliary but essential role in vivo by binding to the 5'-leader sequence and broadening the substrate specificity of the ribozyme. The chain is Ribonuclease P protein component from Burkholderia pseudomallei (strain 1106a).